The primary structure comprises 151 residues: Macrodomain Ter protein (151 aa).

The protein belongs to the MatP family. In terms of assembly, homodimer.

It localises to the cytoplasm. In terms of biological role, required for spatial organization of the terminus region of the chromosome (Ter macrodomain) during the cell cycle. Prevents early segregation of duplicated Ter macrodomains during cell division. Binds specifically to matS, which is a 13 bp signature motif repeated within the Ter macrodomain. In Escherichia fergusonii (strain ATCC 35469 / DSM 13698 / CCUG 18766 / IAM 14443 / JCM 21226 / LMG 7866 / NBRC 102419 / NCTC 12128 / CDC 0568-73), this protein is Macrodomain Ter protein.